The primary structure comprises 797 residues: Ubiquitin carboxyl-terminal hydrolase 14 (797 aa).

A UBP-type; degenerate zinc finger spans residues 156–266; sequence LISEHALTLQ…EHLAHFGIDF (111 aa). The Zn(2+) site is built by Cys-180, Cys-183, Cys-200, and His-213. One can recognise a USP domain in the interval 308-796; it reads TGLVNLGNSC…MGYVYFFQRL (489 aa). Cys-317 functions as the Nucleophile in the catalytic mechanism. UBA domains are found at residues 613–654 and 670–710; these read VANE…LLSH and DIDQ…VFNN. His-758 serves as the catalytic Proton acceptor.

This sequence belongs to the peptidase C19 family. Constitutively and ubiquitously expressed (at protein level).

The enzyme catalyses Thiol-dependent hydrolysis of ester, thioester, amide, peptide and isopeptide bonds formed by the C-terminal Gly of ubiquitin (a 76-residue protein attached to proteins as an intracellular targeting signal).. Its function is as follows. Recognizes and hydrolyzes the peptide bond at the C-terminal Gly of ubiquitin. Involved in the processing of poly-ubiquitin precursors as well as that of ubiquitinated proteins. Involved in seed and embryo development. The chain is Ubiquitin carboxyl-terminal hydrolase 14 (UBP14) from Arabidopsis thaliana (Mouse-ear cress).